The chain runs to 739 residues: Catalase-peroxidase 2 (739 aa).

The signal sequence occupies residues Met1–Ala26. The tryptophyl-tyrosyl-methioninium (Trp-Tyr) (with M-253) cross-link spans Trp105–Tyr227. His106 acts as the Proton acceptor in catalysis. The tryptophyl-tyrosyl-methioninium (Tyr-Met) (with W-105) cross-link spans Tyr227–Met253. A heme b-binding site is contributed by His268.

Belongs to the peroxidase family. Peroxidase/catalase subfamily. As to quaternary structure, homodimer or homotetramer. Heme b serves as cofactor. Formation of the three residue Trp-Tyr-Met cross-link is important for the catalase, but not the peroxidase activity of the enzyme.

It carries out the reaction H2O2 + AH2 = A + 2 H2O. The enzyme catalyses 2 H2O2 = O2 + 2 H2O. Bifunctional enzyme with both catalase and broad-spectrum peroxidase activity. This chain is Catalase-peroxidase 2, found in Shewanella sp. (strain MR-4).